Reading from the N-terminus, the 223-residue chain is Protein-disulfide oxidoreductase DsbI (223 aa).

A helical membrane pass occupies residues 26 to 46; sequence LLWLLMAVAMGALIILAHSFF. Cys-55 and Cys-58 are joined by a disulfide. 2 helical membrane-spanning segments follow: residues 59–78 and 82–102; these read VYIR…AAIN and IILK…GLKF. Cysteines 127 and 153 form a disulfide. Residues 198–218 traverse the membrane as a helical segment; that stretch reads CMLAFGMCLVLLVIMSGAWAL.

The protein belongs to the DsbB family. DsbI subfamily. Interacts with DsbL.

The protein localises to the cell inner membrane. Required for disulfide bond formation in some proteins. Part of a redox system composed of DsbI and DsbL that mediates formation of an essential disulfide bond in AssT. This chain is Protein-disulfide oxidoreductase DsbI, found in Escherichia coli O1:K1 / APEC.